The sequence spans 137 residues: Peptide methionine sulfoxide reductase MsrB (137 aa).

The 123-residue stretch at 9 to 131 folds into the MsrB domain; that stretch reads DAEWRAMLDD…NSASLRFDAT (123 aa). Cysteine 48, cysteine 51, cysteine 97, and cysteine 100 together coordinate Zn(2+). Cysteine 120 (nucleophile) is an active-site residue.

This sequence belongs to the MsrB Met sulfoxide reductase family. Zn(2+) serves as cofactor.

The catalysed reaction is L-methionyl-[protein] + [thioredoxin]-disulfide + H2O = L-methionyl-(R)-S-oxide-[protein] + [thioredoxin]-dithiol. The sequence is that of Peptide methionine sulfoxide reductase MsrB from Herminiimonas arsenicoxydans.